A 174-amino-acid chain; its full sequence is Calcineurin subunit B (174 aa).

4 consecutive EF-hand domains span residues 21-56, 60-88, 90-125, and 131-166; these read EEIERIRKRFIKIDANQSGSIDRNEFLSIPSVASNP, RLFSVVDEDGGGDVDFQEFINSLSVFSVH, NKEEKLKFAFKIYDIDRDGYISNGELYLVLKMMVGT, and QLQQIVDKTIMEVDKDRDGKISFEEFKDIVSGSNVT. D34, N36, S38, S40, E45, D66, D68, D72, E77, D103, D105, D107, Y109, E114, D144, D146, D148, K150, and E155 together coordinate Ca(2+).

This sequence belongs to the calcineurin regulatory subunit family. As to quaternary structure, composed of a catalytic subunit (A) and a regulatory subunit (B).

Functionally, regulatory subunit of calcineurin, a calcium-dependent, calmodulin stimulated protein phosphatase. Confers calcium sensitivity. The protein is Calcineurin subunit B (cnb1) of Schizosaccharomyces pombe (strain 972 / ATCC 24843) (Fission yeast).